Consider the following 834-residue polypeptide: Ras GTPase-activating protein 3 (834 aa).

2 C2 domains span residues 1 to 112 and 123 to 263; these read MAVE…DTWF and VQGK…EAWY. N-acetylalanine is present on alanine 2. A Phosphotyrosine modification is found at tyrosine 66. Phosphoserine is present on serine 77. Threonine 110 carries the post-translational modification Phosphothreonine. The Ras-GAP domain maps to 346 to 561; it reads GRVVPFISAI…DAVKNFLDLI (216 aa). The 102-residue stretch at 576 to 677 folds into the PH domain; the sequence is ILLKEGFMIK…WIDILTKVSQ (102 aa). The Btk-type zinc finger occupies 679-715; that stretch reads NQKRLTVFHPSAYLNGHWLCCRASSDTAAGCTPCTGG. Residues histidine 687, cysteine 698, cysteine 699, and cysteine 709 each coordinate Zn(2+). A phosphoserine mark is found at serine 809 and serine 833.

In terms of tissue distribution, high levels in brain, lower in spleen and lung.

In terms of biological role, inhibitory regulator of the Ras-cyclic AMP pathway. May bind inositol tetrakisphosphate (IP4). This is Ras GTPase-activating protein 3 (Rasa3) from Mus musculus (Mouse).